The following is a 386-amino-acid chain: DNA (cytosine-5)-methyltransferase 3-like (386 aa).

The ADD domain maps to 41 to 173 (EVKANQRNIE…LKAFYDRESE (133 aa)). The GATA-type; atypical zinc-finger motif lies at 52-82 (ICICCGSLQVHTQHPLFEGGICAPCKDKFLD). Residues 93–149 (QSYCSICCSGETLLICGNPDCTRCYCFECVDSLVGPGTSGKVHAMSNWVCYLCLPSS) form a PHD-type; atypical zinc finger.

Homodimer. Heterotetramer composed of 1 DNMT3A homodimer and 2 DNMT3L subunits (DNMT3L-DNMT3A-DNMT3A-DNMT3L). Interacts with histone H3 (via N-terminus); interaction is strongly inhibited by methylation at lysine 4 (H3K4me). Interacts with EZH2; the interaction is direct. Interacts with SPOCD1. As to expression, expressed at low levels in several tissues including testis, ovary, and thymus.

The protein resides in the nucleus. Functionally, catalytically inactive regulatory factor of DNA methyltransferases that can either promote or inhibit DNA methylation depending on the context. Essential for the function of DNMT3A and DNMT3B: activates DNMT3A and DNMT3B by binding to their catalytic domain. Acts by accelerating the binding of DNA and S-adenosyl-L-methionine (AdoMet) to the methyltransferases and dissociates from the complex after DNA binding to the methyltransferases. Recognizes unmethylated histone H3 lysine 4 (H3K4me0) and induces de novo DNA methylation by recruitment or activation of DNMT3. Plays a key role in embryonic stem cells and germ cells. In germ cells, required for the methylation of imprinted loci together with DNMT3A. In male germ cells, specifically required to methylate retrotransposons, preventing their mobilization. Plays a key role in embryonic stem cells (ESCs) by acting both as an positive and negative regulator of DNA methylation. While it promotes DNA methylation of housekeeping genes together with DNMT3A and DNMT3B, it also acts as an inhibitor of DNA methylation at the promoter of bivalent genes. Interacts with the EZH2 component of the PRC2/EED-EZH2 complex, preventing interaction of DNMT3A and DNMT3B with the PRC2/EED-EZH2 complex, leading to maintain low methylation levels at the promoters of bivalent genes. Promotes differentiation of ESCs into primordial germ cells by inhibiting DNA methylation at the promoter of RHOX5, thereby activating its expression. This Homo sapiens (Human) protein is DNA (cytosine-5)-methyltransferase 3-like (DNMT3L).